Reading from the N-terminus, the 405-residue chain is Probable tRNA sulfurtransferase (405 aa).

In terms of domain architecture, THUMP spans 60 to 165 (EGVIERLRHV…QDAIYLTNQV (106 aa)). ATP-binding positions include 183–184 (ML), 208–209 (HF), Arg-265, Gly-287, and Gln-296.

The protein belongs to the ThiI family.

The protein localises to the cytoplasm. The enzyme catalyses [ThiI sulfur-carrier protein]-S-sulfanyl-L-cysteine + a uridine in tRNA + 2 reduced [2Fe-2S]-[ferredoxin] + ATP + H(+) = [ThiI sulfur-carrier protein]-L-cysteine + a 4-thiouridine in tRNA + 2 oxidized [2Fe-2S]-[ferredoxin] + AMP + diphosphate. It carries out the reaction [ThiS sulfur-carrier protein]-C-terminal Gly-Gly-AMP + S-sulfanyl-L-cysteinyl-[cysteine desulfurase] + AH2 = [ThiS sulfur-carrier protein]-C-terminal-Gly-aminoethanethioate + L-cysteinyl-[cysteine desulfurase] + A + AMP + 2 H(+). The protein operates within cofactor biosynthesis; thiamine diphosphate biosynthesis. Functionally, catalyzes the ATP-dependent transfer of a sulfur to tRNA to produce 4-thiouridine in position 8 of tRNAs, which functions as a near-UV photosensor. Also catalyzes the transfer of sulfur to the sulfur carrier protein ThiS, forming ThiS-thiocarboxylate. This is a step in the synthesis of thiazole, in the thiamine biosynthesis pathway. The sulfur is donated as persulfide by IscS. In Latilactobacillus sakei subsp. sakei (strain 23K) (Lactobacillus sakei subsp. sakei), this protein is Probable tRNA sulfurtransferase.